Here is an 85-residue protein sequence, read N- to C-terminus: MGNLISMCLYNSKGNSTAKINDSSTWYPQPGQHISIRTYRELNPAPTSTPTSTRTETLSNGENSRLTLDLLEEASRQLTTNVQRP.

A lipid anchor (N-myristoyl glycine; by host) is attached at Gly2. Residues 42–65 (LNPAPTSTPTSTRTETLSNGENSR) form a disordered region. Low complexity predominate over residues 44–59 (PAPTSTPTSTRTETLS).

This sequence belongs to the geminiviridae protein AC4/C4 family.

The protein resides in the host cell membrane. Its function is as follows. Pathogenicity determinant. May act as a suppressor of RNA-mediated gene silencing, also known as post-transcriptional gene silencing (PTGS), a mechanism of plant viral defense that limits the accumulation of viral RNAs. This chain is Protein C4, found in Solanum lycopersicum (Tomato).